The following is a 197-amino-acid chain: 3-isopropylmalate dehydratase small subunit (197 aa).

This sequence belongs to the LeuD family. LeuD type 1 subfamily. As to quaternary structure, heterodimer of LeuC and LeuD.

It carries out the reaction (2R,3S)-3-isopropylmalate = (2S)-2-isopropylmalate. It participates in amino-acid biosynthesis; L-leucine biosynthesis; L-leucine from 3-methyl-2-oxobutanoate: step 2/4. In terms of biological role, catalyzes the isomerization between 2-isopropylmalate and 3-isopropylmalate, via the formation of 2-isopropylmaleate. In Corynebacterium glutamicum (strain ATCC 13032 / DSM 20300 / JCM 1318 / BCRC 11384 / CCUG 27702 / LMG 3730 / NBRC 12168 / NCIMB 10025 / NRRL B-2784 / 534), this protein is 3-isopropylmalate dehydratase small subunit.